The chain runs to 127 residues: Large ribosomal subunit protein uL24 (127 aa).

The protein belongs to the universal ribosomal protein uL24 family. In terms of assembly, component of the large ribosomal subunit. Mature ribosomes consist of a small (40S) and a large (60S) subunit. The 40S subunit contains about 32 different proteins and 1 molecule of RNA (18S). The 60S subunit contains 45 different proteins and 3 molecules of RNA (25S, 5.8S and 5S).

Its subcellular location is the cytoplasm. Functionally, component of the ribosome, a large ribonucleoprotein complex responsible for the synthesis of proteins in the cell. The small ribosomal subunit (SSU) binds messenger RNAs (mRNAs) and translates the encoded message by selecting cognate aminoacyl-transfer RNA (tRNA) molecules. The large subunit (LSU) contains the ribosomal catalytic site termed the peptidyl transferase center (PTC), which catalyzes the formation of peptide bonds, thereby polymerizing the amino acids delivered by tRNAs into a polypeptide chain. The nascent polypeptides leave the ribosome through a tunnel in the LSU and interact with protein factors that function in enzymatic processing, targeting, and the membrane insertion of nascent chains at the exit of the ribosomal tunnel. This chain is Large ribosomal subunit protein uL24, found in Candida albicans (strain SC5314 / ATCC MYA-2876) (Yeast).